A 343-amino-acid chain; its full sequence is N-acetyl-gamma-glutamyl-phosphate reductase (343 aa).

The active site involves cysteine 147.

Belongs to the NAGSA dehydrogenase family. Type 1 subfamily.

It localises to the cytoplasm. It carries out the reaction N-acetyl-L-glutamate 5-semialdehyde + phosphate + NADP(+) = N-acetyl-L-glutamyl 5-phosphate + NADPH + H(+). Its pathway is amino-acid biosynthesis; L-arginine biosynthesis; N(2)-acetyl-L-ornithine from L-glutamate: step 3/4. In terms of biological role, catalyzes the NADPH-dependent reduction of N-acetyl-5-glutamyl phosphate to yield N-acetyl-L-glutamate 5-semialdehyde. In Listeria monocytogenes serotype 4b (strain CLIP80459), this protein is N-acetyl-gamma-glutamyl-phosphate reductase.